We begin with the raw amino-acid sequence, 288 residues long: Syntaxin-1A (288 aa).

A compositionally biased stretch (basic and acidic residues) spans 1-13; that stretch reads MKDRTQELRTAKD. The disordered stretch occupies residues 1–20; the sequence is MKDRTQELRTAKDSDDDDDV. Topologically, residues 1–265 are cytoplasmic; sequence MKDRTQELRT…KYQSKARRKK (265 aa). Phosphoserine occurs at positions 14, 64, and 95. A coiled-coil region spans residues 68–109; that stretch reads DEKTKEELEELMSDIKKTANKVRSKLKSIEQSIEQEEGLNRS. Ser188 bears the Phosphoserine; by DAPK1 mark. The region spanning 192 to 254 is the t-SNARE coiled-coil homology domain; that stretch reads LSEIETRHSE…ERAVSDTKKA (63 aa). Glycyl lysine isopeptide (Lys-Gly) (interchain with G-Cter in SUMO) cross-links involve residues Lys252, Lys253, and Lys256. The chain crosses the membrane as a helical; Anchor for type IV membrane protein span at residues 266 to 288; it reads IMIVICCVVLGIVIASTFGGIFG.

This sequence belongs to the syntaxin family. In terms of assembly, part of the SNARE core complex containing SNAP25, VAMP2 and STX1A; this complex constitutes the basic catalytic machinery of the complex neurotransmitter release apparatus. The SNARE complex interacts with CPLX1. Interacts with STXBP1. The interaction with STXBP1 promotes assembly of the SNARE complex. Interacts (via C-terminus) with KCNB1 (via C-terminus); the interaction increases in a calcium-dependent manner and induces a pore-independent enhancement of exocytosis in neuroendocrine cells, chromaffin cells, pancreatic beta cells and from the soma of dorsal root ganglia (DRG) neurons. Interacts with SYTL4. Interacts with STXBP6. Interacts with PLCL1 (via C2 domain). Interacts with OTOF. Interacts with LGI3. Interacts (via the H3 domain) with SLC6A4 (via the N-terminus); this interaction regulates SLC4A6 channel conductance in thalamocortical neurons. Interacts with SYT6 and SYT8; the interaction is Ca(2+)-dependent. Interacts with VAMP8. Interacts with SNAP23. Interacts with VAPA and SYBU. Interacts with PRRT2. Interacts with SEPT8. Interacts with STXBP5L. Interacts with synaptotagmin-1/SYT1. Interacts with SEPTIN5; in the cerebellar cortex. Interacts with SEPTIN4; in the striatum. Post-translationally, phosphorylated by CK2. Phosphorylation at Ser-188 by DAPK1 significantly decreases its interaction with STXBP1. Sumoylated, sumoylation is required for regulation of synaptic vesicle endocytosis. In terms of processing, (Microbial infection) Targeted and hydrolyzed by C.botulinum neurotoxin type C (BoNT/C) which inhibits neurotransmitter release. Probably hydrolyzes the 253-Lys-|-Ala-254 bond.

The protein localises to the cytoplasmic vesicle. Its subcellular location is the secretory vesicle. The protein resides in the synaptic vesicle membrane. It localises to the synapse. It is found in the synaptosome. The protein localises to the cell membrane. In terms of biological role, plays an essential role in hormone and neurotransmitter calcium-dependent exocytosis and endocytosis. Part of the SNARE (Soluble NSF Attachment Receptor) complex composed of SNAP25, STX1A and VAMP2 which mediates the fusion of synaptic vesicles with the presynaptic plasma membrane. STX1A and SNAP25 are localized on the plasma membrane while VAMP2 resides in synaptic vesicles. The pairing of the three SNAREs from the N-terminal SNARE motifs to the C-terminal anchors leads to the formation of the SNARE complex, which brings membranes into close proximity and results in final fusion. Participates in the calcium-dependent regulation of acrosomal exocytosis in sperm. Also plays an important role in the exocytosis of hormones such as insulin or glucagon-like peptide 1 (GLP-1). This Bos taurus (Bovine) protein is Syntaxin-1A (STX1A).